The following is a 419-amino-acid chain: Testin (419 aa).

Residues 92–199 enclose the PET domain; sequence MILTNPVAAK…GDVKLPSEMN (108 aa). 2 disordered regions span residues 133–164 and 199–222; these read EKQPVAGSEGAQYRKKQLAKQLPAHDQDPSKC and NAQGDKVHNPAGDRNTPAAVGSKD. Residues 155-164 show a composition bias toward basic and acidic residues; sequence PAHDQDPSKC. 3 LIM zinc-binding domains span residues 232–295, 297–357, and 360–419; these read YSCY…CDSE, PRCA…NHAV, and QGCH…KMMS.

The protein belongs to the prickle / espinas / testin family. As to quaternary structure, interacts via LIM domain 1 with ZYX. Interacts (via LIM domain 3) with ENAH and VASP. Interacts with ALKBH4, talin, actin, alpha-actinin, GRIP1 and PXN. Interacts (via LIM domain 2) with ACTL7A (via N-terminus). Heterodimer with ACTL7A; the heterodimer interacts with ENAH to form a heterotrimer.

The protein localises to the cytoplasm. Its subcellular location is the cell junction. The protein resides in the focal adhesion. Functionally, scaffold protein that may play a role in cell adhesion, cell spreading and in the reorganization of the actin cytoskeleton. Plays a role in the regulation of cell proliferation. May act as a tumor suppressor. The protein is Testin (Tes) of Rattus norvegicus (Rat).